Here is a 64-residue protein sequence, read N- to C-terminus: Thrombin-like enzyme collinein-4 (64 aa).

Intrachain disulfides connect cysteine 5/cysteine 23 and cysteine 34/cysteine 51.

In terms of assembly, monomer. As to expression, expressed by the vanom gland.

It localises to the secreted. In terms of biological role, thrombin-like snake venom serine protease. The sequence is that of Thrombin-like enzyme collinein-4 from Crotalus durissus collilineatus (Brazilian rattlesnake).